We begin with the raw amino-acid sequence, 432 residues long: Glutamate-1-semialdehyde 2,1-aminomutase (432 aa).

Position 267 is an N6-(pyridoxal phosphate)lysine (K267).

Belongs to the class-III pyridoxal-phosphate-dependent aminotransferase family. HemL subfamily. Homodimer. The cofactor is pyridoxal 5'-phosphate.

The protein localises to the cytoplasm. The catalysed reaction is (S)-4-amino-5-oxopentanoate = 5-aminolevulinate. The protein operates within porphyrin-containing compound metabolism; protoporphyrin-IX biosynthesis; 5-aminolevulinate from L-glutamyl-tRNA(Glu): step 2/2. The protein is Glutamate-1-semialdehyde 2,1-aminomutase of Rhodococcus erythropolis (strain PR4 / NBRC 100887).